The chain runs to 459 residues: tRNA modification GTPase MnmE (459 aa).

(6S)-5-formyl-5,6,7,8-tetrahydrofolate is bound by residues arginine 29, glutamate 91, and arginine 130. One can recognise a TrmE-type G domain in the interval 225–381 (GVKVAIVGRP…LEEALEQLVT (157 aa)). Asparagine 235 contacts K(+). Residues 235–240 (NVGKSS), 254–260 (TDLPGTT), and 279–282 (DTAG) contribute to the GTP site. Residue serine 239 participates in Mg(2+) binding. K(+) is bound by residues threonine 254, leucine 256, and threonine 259. Threonine 260 is a binding site for Mg(2+). A (6S)-5-formyl-5,6,7,8-tetrahydrofolate-binding site is contributed by lysine 459.

It belongs to the TRAFAC class TrmE-Era-EngA-EngB-Septin-like GTPase superfamily. TrmE GTPase family. Homodimer. Heterotetramer of two MnmE and two MnmG subunits. K(+) is required as a cofactor.

The protein resides in the cytoplasm. Its function is as follows. Exhibits a very high intrinsic GTPase hydrolysis rate. Involved in the addition of a carboxymethylaminomethyl (cmnm) group at the wobble position (U34) of certain tRNAs, forming tRNA-cmnm(5)s(2)U34. The chain is tRNA modification GTPase MnmE from Synechococcus sp. (strain JA-2-3B'a(2-13)) (Cyanobacteria bacterium Yellowstone B-Prime).